Reading from the N-terminus, the 71-residue chain is Sodium channel neurotoxin MeuNaTxalpha-12 (71 aa).

The signal sequence occupies residues 1–6; the sequence is MTGVES. One can recognise an LCN-type CS-alpha/beta domain in the interval 8–70; that stretch reads RDAYIAQGNN…VPIRIQGKCQ (63 aa). 4 disulfides stabilise this stretch: cysteine 18-cysteine 69, cysteine 22-cysteine 42, cysteine 28-cysteine 52, and cysteine 32-cysteine 54. A propeptide (removed by a carboxypeptidase) is located at residue arginine 71.

The protein belongs to the long (4 C-C) scorpion toxin superfamily. Sodium channel inhibitor family. Alpha subfamily. In terms of tissue distribution, expressed by the venom gland.

The protein resides in the secreted. In terms of biological role, alpha toxins bind voltage-independently at site-3 of sodium channels (Nav) and inhibit the inactivation of the activated channels, thereby blocking neuronal transmission. The sequence is that of Sodium channel neurotoxin MeuNaTxalpha-12 from Mesobuthus eupeus (Lesser Asian scorpion).